The sequence spans 1359 residues: NPC1-like intracellular cholesterol transporter 1 (1359 aa).

Positions 1 to 21 (MAEAGLRGWLLWALLLRLAQS) are cleaved as a signal peptide. At 22–284 (EPYTTIHQPG…TFYLGQMPGS (263 aa)) the chain is on the extracellular side. Cystine bridges form between Cys-33-Cys-90, Cys-39-Cys-57, Cys-78-Cys-125, Cys-91-Cys-129, Cys-113-Cys-254, Cys-116-Cys-172, Cys-189-Cys-197, Cys-243-Cys-259, and Cys-256-Cys-263. The N-linked (GlcNAc...) asparagine glycan is linked to Asn-54. Asn-132 and Asn-138 each carry an N-linked (GlcNAc...) asparagine glycan. Asn-244 carries N-linked (GlcNAc...) asparagine glycosylation. A helical membrane pass occupies residues 285 to 305 (LVLIIILCSVFAVVTILLVGF). The Cytoplasmic portion of the chain corresponds to 306-351 (RVAPARDKSKMVDPKKGTSLSDKLSFSTHTLLGQFFQGWGTWVASW). Residues 352-372 (PLTILVLSVIPVVALAAGLVF) traverse the membrane as a helical segment. Residues 373–632 (TELTTDPVEL…DEINRTTAED (260 aa)) lie on the Extracellular side of the membrane. N-linked (GlcNAc...) asparagine glycans are attached at residues Asn-416, Asn-431, Asn-464, Asn-479, Asn-497, and Asn-506. The cysteines at positions 471 and 485 are disulfide-linked. Cys-525 and Cys-542 are joined by a disulfide. A glycan (N-linked (GlcNAc...) asparagine) is linked at Asn-626. An SSD domain is found at 632-797 (DLPIFATSYI…MSAFVALLSL (166 aa)). A helical membrane pass occupies residues 633 to 653 (LPIFATSYIVIFLYISLALGS). Over 654-666 (YSSWSRVMVDSKA) the chain is Cytoplasmic. The chain crosses the membrane as a helical span at residues 667 to 687 (TLGLGGVAVVLGAVMAAMGFF). At 688 to 696 (SYLGIRSSL) the chain is on the extracellular side. A helical membrane pass occupies residues 697–717 (VILQVVPFLVLSVGADNIFIF). Topologically, residues 718-742 (VLEYQRLPRRPGEPREVHIGRALGR) are cytoplasmic. Residues 743-763 (VAPSMLLCSLSEAICFFLGAL) traverse the membrane as a helical segment. Residues 764–776 (TPMPAVRTFALTS) lie on the Extracellular side of the membrane. Residues 777–797 (GLAVILDFLLQMSAFVALLSL) traverse the membrane as a helical segment. Residues 798-846 (DSKRQEASRLDVCCCVKPQELPPPGQGEGLLLGFFQKAYAPFLLHWITR) are Cytoplasmic-facing. The chain crosses the membrane as a helical span at residues 847 to 867 (GVVLLLFLALFGVSLYSMCHI). Topologically, residues 868 to 1139 (SVGLDQELAL…EQYLTILPEG (272 aa)) are extracellular. Intrachain disulfides connect Cys-920–Cys-925, Cys-966–Cys-1024, and Cys-980–Cys-989. A helical transmembrane segment spans residues 1140-1160 (LFMLSLCLVPTFAVSCLLLGL). At 1161-1168 (DLRSGLLN) the chain is on the cytoplasmic side. A helical transmembrane segment spans residues 1169–1189 (LLSIVMILVDTVGFMALWGIS). Residues 1190-1191 (YN) lie on the Extracellular side of the membrane. A helical transmembrane segment spans residues 1192-1212 (AVSLINLVSAVGMSVEFVSHI). Topologically, residues 1213 to 1236 (TRSFAISTKPTWLERAKEATISMG) are cytoplasmic. A helical membrane pass occupies residues 1237–1257 (SAVFAGVAMTNLPGILVLGLA). The Extracellular portion of the chain corresponds to 1258–1268 (KAQLIQIFFFR). The helical transmembrane segment at 1269–1289 (LNLLITLLGLLHGLVFLPVIL) threads the bilayer. At 1290-1359 (SYVGPDVNPA…NFLPNNGRQF (70 aa)) the chain is on the cytoplasmic side.

The protein belongs to the patched family. Interacts with RAB11A, MYO5B and RAB11FIP2. Interaction with RAB11A, MYO5B and RAB11FIP2 is required for proper transport to the plasma membrane upon cholesterol depletion. Interacts with NPC2. Interacts with LIMA1. Highly glycosylated. In terms of tissue distribution, widely expressed. Expressed in liver. Also expressed in small intestine, pancreas, kidney, lung, pancreas, spleen, heart, gall bladder, brain, testis, stomach and muscle.

It is found in the apical cell membrane. Its subcellular location is the cell membrane. The protein resides in the cytoplasmic vesicle membrane. The catalysed reaction is cholesterol(in) = cholesterol(out). The enzyme catalyses sitosterol(out) = sitosterol(in). Its function is as follows. Plays a major role in cholesterol homeostasis. Critical for the uptake of cholesterol across the plasma membrane of the intestinal enterocyte. Involved in plant sterol absorption, it transports sitosterol, although at lower rates than cholesterol. Is the direct molecular target of ezetimibe, a drug that inhibits cholesterol absorption and is approved for the treatment of hypercholesterolemia. May have a function in the transport of multiple lipids and their homeostasis, thereby influencing lipid metabolism regulation. May be involved in caveolin trafficking from the plasma membrane. In addition, acts as a negative regulator of NPC2 and down-regulates its expression and secretion by inhibiting its maturation and accelerating its degradation. In Homo sapiens (Human), this protein is NPC1-like intracellular cholesterol transporter 1.